The chain runs to 150 residues: CCAAT/enhancer-binding protein gamma (150 aa).

Lys3 is covalently cross-linked (Glycyl lysine isopeptide (Lys-Gly) (interchain with G-Cter in SUMO2)). The interval 27-94 is disordered; that stretch reads GLQQVPQLVP…QKAQDTLQRV (68 aa). Low complexity predominate over residues 28 to 37; that stretch reads LQQVPQLVPA. Over residues 56-72 the composition is skewed to basic and acidic residues; that stretch reads SPMDRNSDEYRQRRERN. The 64-residue stretch at 62–125 folds into the bZIP domain; the sequence is SDEYRQRRER…SVLKDLFLEH (64 aa). The basic motif stretch occupies residues 66–93; that stretch reads RQRRERNNMAVKKSRLKSKQKAQDTLQR. The interval 97–118 is leucine-zipper; it reads LKEENERLEAKIKLLTKELSVL. The tract at residues 129 to 150 is disordered; the sequence is LADNVQPISTETTATNSDNPGQ. A compositionally biased stretch (polar residues) spans 134–150; the sequence is QPISTETTATNSDNPGQ.

The protein belongs to the bZIP family. C/EBP subfamily. Binds DNA as a dimer and can form stable heterodimers with CEBPA. Can form stable heterodimers with CEBPB. Interacts with ZNF638; this interaction increases transcriptional activation. In terms of tissue distribution, ubiquitous.

The protein localises to the nucleus. Transcription factor that binds to the promoter and the enhancer regions of target genes. Binds to the promoter and the enhancer of the immunoglobulin heavy chain. Binds to GPE1, a cis-acting element in the G-CSF gene promoter. Binds to the enhancer element PRE-I (positive regulatory element-I) of the IL-4 gene. Binds to the promoter and the enhancer of the alpha-1-fetoprotein gene. The sequence is that of CCAAT/enhancer-binding protein gamma (Cebpg) from Mus musculus (Mouse).